We begin with the raw amino-acid sequence, 204 residues long: Holliday junction branch migration complex subunit RuvA (204 aa).

Residues 1-64 (MIARLRGTLL…EDGQTLFGFR (64 aa)) are domain I. The domain II stretch occupies residues 65-143 (TRAERDLFRR…GVGGGSTAAP (79 aa)). The interval 144 to 153 (AAGADHPTGE) is flexible linker. Residues 153–204 (ENDPVSEAIEGLVALGYKPPEAARMARNAAEPELGCEAIIRRALQRAVPRGG) form a domain III region.

The protein belongs to the RuvA family. Homotetramer. Forms an RuvA(8)-RuvB(12)-Holliday junction (HJ) complex. HJ DNA is sandwiched between 2 RuvA tetramers; dsDNA enters through RuvA and exits via RuvB. An RuvB hexamer assembles on each DNA strand where it exits the tetramer. Each RuvB hexamer is contacted by two RuvA subunits (via domain III) on 2 adjacent RuvB subunits; this complex drives branch migration. In the full resolvosome a probable DNA-RuvA(4)-RuvB(12)-RuvC(2) complex forms which resolves the HJ.

The protein resides in the cytoplasm. The RuvA-RuvB-RuvC complex processes Holliday junction (HJ) DNA during genetic recombination and DNA repair, while the RuvA-RuvB complex plays an important role in the rescue of blocked DNA replication forks via replication fork reversal (RFR). RuvA specifically binds to HJ cruciform DNA, conferring on it an open structure. The RuvB hexamer acts as an ATP-dependent pump, pulling dsDNA into and through the RuvAB complex. HJ branch migration allows RuvC to scan DNA until it finds its consensus sequence, where it cleaves and resolves the cruciform DNA. This Halorhodospira halophila (strain DSM 244 / SL1) (Ectothiorhodospira halophila (strain DSM 244 / SL1)) protein is Holliday junction branch migration complex subunit RuvA.